Reading from the N-terminus, the 202-residue chain is NAD(P)H-quinone oxidoreductase subunit I (202 aa).

4Fe-4S ferredoxin-type domains lie at 55-84 (GRIH…VDWV) and 95-124 (KNYS…MTEE). [4Fe-4S] cluster-binding residues include Cys64, Cys67, Cys70, Cys74, Cys104, Cys107, Cys110, and Cys114. Positions 168 to 187 (EYDPHVVPSDRPRAGQRPEE) are enriched in basic and acidic residues. A disordered region spans residues 168-202 (EYDPHVVPSDRPRAGQRPEELVDQYKQAAAANEEN).

Belongs to the complex I 23 kDa subunit family. NDH-1 is composed of at least 11 different subunits. Requires [4Fe-4S] cluster as cofactor.

The protein localises to the cellular thylakoid membrane. It carries out the reaction a plastoquinone + NADH + (n+1) H(+)(in) = a plastoquinol + NAD(+) + n H(+)(out). The catalysed reaction is a plastoquinone + NADPH + (n+1) H(+)(in) = a plastoquinol + NADP(+) + n H(+)(out). Functionally, NDH-1 shuttles electrons from an unknown electron donor, via FMN and iron-sulfur (Fe-S) centers, to quinones in the respiratory and/or the photosynthetic chain. The immediate electron acceptor for the enzyme in this species is believed to be plastoquinone. Couples the redox reaction to proton translocation, and thus conserves the redox energy in a proton gradient. This Synechococcus elongatus (strain ATCC 33912 / PCC 7942 / FACHB-805) (Anacystis nidulans R2) protein is NAD(P)H-quinone oxidoreductase subunit I.